A 115-amino-acid polypeptide reads, in one-letter code: Evasin P1181 (115 aa).

The N-terminal stretch at 1-25 (MALNWSFRVIFVSAMWCALLKFATL) is a signal peptide. 4 cysteine pairs are disulfide-bonded: C38-C58, C54-C94, C70-C99, and C89-C108. N45, N72, and N103 each carry an N-linked (GlcNAc...) asparagine glycan.

The protein localises to the secreted. Its function is as follows. Salivary chemokine-binding protein which binds to host chemokines CCL3 and CCL4. This chain is Evasin P1181, found in Amblyomma maculatum (Gulf Coast tick).